A 350-amino-acid chain; its full sequence is S-adenosylmethionine:tRNA ribosyltransferase-isomerase (350 aa).

The protein belongs to the QueA family. As to quaternary structure, monomer.

It is found in the cytoplasm. The catalysed reaction is 7-aminomethyl-7-carbaguanosine(34) in tRNA + S-adenosyl-L-methionine = epoxyqueuosine(34) in tRNA + adenine + L-methionine + 2 H(+). The protein operates within tRNA modification; tRNA-queuosine biosynthesis. In terms of biological role, transfers and isomerizes the ribose moiety from AdoMet to the 7-aminomethyl group of 7-deazaguanine (preQ1-tRNA) to give epoxyqueuosine (oQ-tRNA). The polypeptide is S-adenosylmethionine:tRNA ribosyltransferase-isomerase (Aliivibrio salmonicida (strain LFI1238) (Vibrio salmonicida (strain LFI1238))).